The chain runs to 207 residues: Holliday junction branch migration complex subunit RuvA (207 aa).

Positions 1 to 64 (MISYIKGELA…EDECSLFGFL (64 aa)) are domain I. Residues 65 to 143 (TRDDLSMFKM…LDEVFESALS (79 aa)) form a domain II region. The segment at 144–155 (KNKKADNNSNVS) is flexible linker. Residues 156-207 (NVMMIRNDAVEALVSLGYSSKDALVAVKEVEDIENKDSETVLKEALKKLVKF) are domain III.

Belongs to the RuvA family. In terms of assembly, homotetramer. Forms an RuvA(8)-RuvB(12)-Holliday junction (HJ) complex. HJ DNA is sandwiched between 2 RuvA tetramers; dsDNA enters through RuvA and exits via RuvB. An RuvB hexamer assembles on each DNA strand where it exits the tetramer. Each RuvB hexamer is contacted by two RuvA subunits (via domain III) on 2 adjacent RuvB subunits; this complex drives branch migration. In the full resolvosome a probable DNA-RuvA(4)-RuvB(12)-RuvC(2) complex forms which resolves the HJ.

Its subcellular location is the cytoplasm. Its function is as follows. The RuvA-RuvB-RuvC complex processes Holliday junction (HJ) DNA during genetic recombination and DNA repair, while the RuvA-RuvB complex plays an important role in the rescue of blocked DNA replication forks via replication fork reversal (RFR). RuvA specifically binds to HJ cruciform DNA, conferring on it an open structure. The RuvB hexamer acts as an ATP-dependent pump, pulling dsDNA into and through the RuvAB complex. HJ branch migration allows RuvC to scan DNA until it finds its consensus sequence, where it cleaves and resolves the cruciform DNA. The sequence is that of Holliday junction branch migration complex subunit RuvA from Lachnospira eligens (strain ATCC 27750 / DSM 3376 / VPI C15-48 / C15-B4) (Eubacterium eligens).